The primary structure comprises 310 residues: Putative sugar kinase PH1459 (310 aa).

The ATP site is built by Lys-194, Thr-219, and Gly-224.

Belongs to the carbohydrate kinase PfkB family.

The sequence is that of Putative sugar kinase PH1459 from Pyrococcus horikoshii (strain ATCC 700860 / DSM 12428 / JCM 9974 / NBRC 100139 / OT-3).